Consider the following 206-residue polypeptide: Small ribosomal subunit protein uS4A (206 aa).

The S4 RNA-binding domain occupies 98–163 (MRLDNVVYRL…SERFKMFAEN (66 aa)).

Belongs to the universal ribosomal protein uS4 family. Part of the 30S ribosomal subunit. Contacts protein S5. The interaction surface between S4 and S5 is involved in control of translational fidelity.

Its function is as follows. One of the primary rRNA binding proteins, it binds directly to 16S rRNA where it nucleates assembly of the body of the 30S subunit. Functionally, with S5 and S12 plays an important role in translational accuracy. This Clostridium perfringens (strain SM101 / Type A) protein is Small ribosomal subunit protein uS4A.